The sequence spans 910 residues: Triacylglycerol lipase 4 (910 aa).

Over residues 51–66 the composition is skewed to basic and acidic residues; that stretch reads SKDNSDVERVEEDAGK. The disordered stretch occupies residues 51–120; the sequence is SKDNSDVERV…TDEGEDERQG (70 aa). At serine 55 the chain carries Phosphoserine. Residues 70–85 are compositionally biased toward polar residues; that stretch reads TGKNKTTNKVNFNLDT. Residues 90 to 116 show a composition bias toward acidic residues; sequence KLDDDQETVTENENNDIEMVETDEGED. Residues 282 to 483 enclose the PNPLA domain; it reads LVLSGGGTFG…DNDLPISRLS (202 aa). The short motif at 286-291 is the GXGXXG element; sequence GGGTFG. The GXSXG motif lies at 313–317; the sequence is GSSAG. Serine 315 acts as the Nucleophile in catalysis. Catalysis depends on aspartate 470, which acts as the Proton acceptor. Disordered stretches follow at residues 657–683 and 713–777; these read EQTSDESKNPENSTLLTRTPTKGDNHI and SPSG…PILQ. The span at 666 to 683 shows a compositional bias: polar residues; the sequence is PENSTLLTRTPTKGDNHI. The residue at position 675 (threonine 675) is a Phosphothreonine; by Cdk1. Phosphoserine occurs at positions 737, 749, 751, and 836. A compositionally biased stretch (polar residues) spans 739–768; sequence TISTSRRPAKSFSFSVASPTSRMLRQSSKI. A disordered region spans residues 874–910; it reads RRHSIDGRPPSQATKSSPFRSRPSSSTQHKSTTSFTQ. Residues 889–899 are compositionally biased toward low complexity; the sequence is SSPFRSRPSSS. A Phosphoserine; by Cdk1 modification is found at serine 890. Positions 900-910 are enriched in polar residues; the sequence is TQHKSTTSFTQ.

Phosphorylation at Thr-675 and Ser-890 by Cdk1/CDC28 stimulates enzyme activity in vivo.

It is found in the lipid droplet. It carries out the reaction a triacylglycerol + H2O = a diacylglycerol + a fatty acid + H(+). It catalyses the reaction 1,2,3-tri-(9Z-octadecenoyl)-glycerol + H2O = di-(9Z)-octadecenoylglycerol + (9Z)-octadecenoate + H(+). The catalysed reaction is 1,2-dihexadecanoyl-sn-glycero-3-phosphocholine + H2O = 1-hexadecanoyl-sn-glycero-3-phosphocholine + hexadecanoate + H(+). The enzyme catalyses cholesteryl (9Z-octadecenoate) + H2O = cholesterol + (9Z)-octadecenoate + H(+). It carries out the reaction 1-(9Z-octadecenoyl)-sn-glycero-3-phosphate + (9Z)-octadecenoyl-CoA = 1,2-di-(9Z-octadecenoyl)-sn-glycero-3-phosphate + CoA. Phosphorylated and activated by cyclin-dependent kinase 1 (Cdk1/CDC28). Loses its lipolytic activity in cells lacking nonpolar lipids, but retains its side activity as lysophospholipid acyltransferase. Functionally, lipid particle-localized triacylglycerol (TAG) lipase. The lipid droplet/particle is a lipid storage compartment which serves as a depot of energy and building blocks for membrane lipid biosynthesis. Involved in the mobilization of the non-polar storage lipids triacylglycerols (TAGs) from lipid particles by hydrolysis of TAGs, releasing and supplying specific fatty acids to the appropriate metabolic pathways. Also has steryl ester (SE) hydrolase and phospholipase A(2) (PLA(2)) activities, and catalyzes the acylation of lysophosphatidic acid (LPA). Contributes to early bud formation in late G1 phase of the cell cycle upon phosphorylation and activation by cyclin-dependent kinase 1 (Cdk1/CDC28). The chain is Triacylglycerol lipase 4 (TGL4) from Saccharomyces cerevisiae (strain ATCC 204508 / S288c) (Baker's yeast).